The following is a 97-amino-acid chain: Co-chaperonin GroES (97 aa).

The protein belongs to the GroES chaperonin family. As to quaternary structure, heptamer of 7 subunits arranged in a ring. Interacts with the chaperonin GroEL.

It is found in the cytoplasm. In terms of biological role, together with the chaperonin GroEL, plays an essential role in assisting protein folding. The GroEL-GroES system forms a nano-cage that allows encapsulation of the non-native substrate proteins and provides a physical environment optimized to promote and accelerate protein folding. GroES binds to the apical surface of the GroEL ring, thereby capping the opening of the GroEL channel. This Escherichia fergusonii (strain ATCC 35469 / DSM 13698 / CCUG 18766 / IAM 14443 / JCM 21226 / LMG 7866 / NBRC 102419 / NCTC 12128 / CDC 0568-73) protein is Co-chaperonin GroES.